Here is a 416-residue protein sequence, read N- to C-terminus: Phosphoglycerate kinase (416 aa).

Residues Asp24–Asn26, Arg40, His63–Arg66, Arg122, and Arg162 each bind substrate. ATP-binding positions include Lys212, Gly300, Glu331, and Gly360–Ser363.

It belongs to the phosphoglycerate kinase family. In terms of assembly, monomer.

Its subcellular location is the cytoplasm. It carries out the reaction (2R)-3-phosphoglycerate + ATP = (2R)-3-phospho-glyceroyl phosphate + ADP. It participates in carbohydrate degradation; glycolysis; pyruvate from D-glyceraldehyde 3-phosphate: step 2/5. This Mycobacterium ulcerans (strain Agy99) protein is Phosphoglycerate kinase.